The sequence spans 310 residues: Porphobilinogen deaminase (310 aa).

Cysteine 242 is subject to S-(dipyrrolylmethanemethyl)cysteine.

This sequence belongs to the HMBS family. In terms of assembly, monomer. Requires dipyrromethane as cofactor.

The enzyme catalyses 4 porphobilinogen + H2O = hydroxymethylbilane + 4 NH4(+). It participates in porphyrin-containing compound metabolism; protoporphyrin-IX biosynthesis; coproporphyrinogen-III from 5-aminolevulinate: step 2/4. Tetrapolymerization of the monopyrrole PBG into the hydroxymethylbilane pre-uroporphyrinogen in several discrete steps. This chain is Porphobilinogen deaminase, found in Shewanella halifaxensis (strain HAW-EB4).